A 724-amino-acid chain; its full sequence is MADEEIKPTSSIEAGGGQNNEHEHGMTSLPNLPSTREETPRELSPVAGSSRAQSTGEQGVKPLKRFDTLPTRRSQLSPDTRRRGRTLTGQVPQDNDLSSRRQVFRRGTSVLSGESGDRMRSIPERGPVPPTTERESRPSGVSDRTQASGLRPRRSTTSRQRGPSIRRRPTVALEAVTSGADVGGGDNFTLAGPAPIETSAQNQPYVDPGYAHLNPAYVQPENVRPVWGLAKPLPRVVRPGMIPSRTEINMAQQQQQQQQQQPQNQADVDLEQGRIEPTLKLSRISTALQNARQQRENNLMEAHGLVSPTNLQTTASRQEPLTAPSQVIEEEDLADKPTNTDTTSPERPPTRPPLSFDGRPSQTSQNSQNEPFPALSDHDDQESVATEVAGPDDLDGEWIGQEIPLVAYDPNYDDEIHNLHTHWSVIRLRFREPLAELLAVTCQLTLGFCADLVVVTSGKNASPAGNEATTDWAWGLASMLGIYIAGGISGAHLNPAISIMLWIYRGFPLRKVPMYVLAQILGAFIAALISFGLYQTNIVEYGGTDLKTSDTMGAFITYPRYPWINASTSFFTEFVGTAILAVAVLALGDDMNAPPGAGMSAFILGLVITVLSMAFGYNTGAALNPSRDLGPRLALAALGYGKDLFTDVYWIWGNWCAPILGAIFGAFLYDAAIFAGGESPVNYPRKRIKRAGHKWRKKWGVRLRKMKPAKKGEDEAYRRWKESQ.

3 disordered regions span residues 1 to 167, 248 to 267, and 302 to 396; these read MADE…SIRR, INMA…NQAD, and AHGL…DLDG. The Cytoplasmic portion of the chain corresponds to 1–434; the sequence is MADEEIKPTS…VIRLRFREPL (434 aa). The segment covering 87–96 has biased composition (polar residues); that stretch reads LTGQVPQDND. Low complexity predominate over residues 252–265; the sequence is QQQQQQQQQQPQNQ. 2 stretches are compositionally biased toward polar residues: residues 307 to 325 and 360 to 370; these read SPTN…TAPS and PSQTSQNSQNE. Residues 435–455 form a helical membrane-spanning segment; that stretch reads AELLAVTCQLTLGFCADLVVV. At 456–472 the chain is on the extracellular side; it reads TSGKNASPAGNEATTDW. A helical transmembrane segment spans residues 473-493; sequence AWGLASMLGIYIAGGISGAHL. Positions 494–496 match the NPA 1 motif; it reads NPA. Over 494 to 513 the chain is Cytoplasmic; that stretch reads NPAISIMLWIYRGFPLRKVP. The chain crosses the membrane as a helical span at residues 514-534; that stretch reads MYVLAQILGAFIAALISFGLY. Topologically, residues 535–567 are extracellular; sequence QTNIVEYGGTDLKTSDTMGAFITYPRYPWINAS. A glycan (N-linked (GlcNAc...) asparagine) is linked at N565. The helical transmembrane segment at 568-588 threads the bilayer; that stretch reads TSFFTEFVGTAILAVAVLALG. Residues 589–595 lie on the Cytoplasmic side of the membrane; that stretch reads DDMNAPP. Residues 596 to 616 form a helical membrane-spanning segment; the sequence is GAGMSAFILGLVITVLSMAFG. Residues 617–647 lie on the Extracellular side of the membrane; the sequence is YNTGAALNPSRDLGPRLALAALGYGKDLFTD. Positions 624–626 match the NPA 2 motif; it reads NPS. The chain crosses the membrane as a helical span at residues 648-668; sequence VYWIWGNWCAPILGAIFGAFL. Over 669-724 the chain is Cytoplasmic; sequence YDAAIFAGGESPVNYPRKRIKRAGHKWRKKWGVRLRKMKPAKKGEDEAYRRWKESQ.

This sequence belongs to the MIP/aquaporin (TC 1.A.8) family.

It is found in the membrane. It carries out the reaction H2O(in) = H2O(out). The enzyme catalyses glycerol(in) = glycerol(out). Water channel required to facilitate the transport of water across membranes. May play a role in the vegetative growth. The sequence is that of Aquaglyceroporin-4 from Botryotinia fuckeliana (strain B05.10) (Noble rot fungus).